Here is a 382-residue protein sequence, read N- to C-terminus: Mannitol-1-phosphate 5-dehydrogenase (382 aa).

3–14 (ALHFGAGNIGRG) provides a ligand contact to NAD(+).

The protein belongs to the mannitol dehydrogenase family.

The enzyme catalyses D-mannitol 1-phosphate + NAD(+) = beta-D-fructose 6-phosphate + NADH + H(+). The protein is Mannitol-1-phosphate 5-dehydrogenase of Salmonella paratyphi A (strain ATCC 9150 / SARB42).